The following is a 436-amino-acid chain: GTPase Der (436 aa).

2 consecutive EngA-type G domains span residues 4 to 167 (PVVA…PKVE) and 176 to 351 (IRFC…ESHN). GTP contacts are provided by residues 10–17 (GRPNVGKS), 57–61 (DTGGI), 119–122 (NKVD), 182–189 (GRPNVGKS), 229–233 (DTAGM), and 294–297 (NKWD). Residues 352–436 (IRVQTNVLND…PIRIIARARD (85 aa)) enclose the KH-like domain.

This sequence belongs to the TRAFAC class TrmE-Era-EngA-EngB-Septin-like GTPase superfamily. EngA (Der) GTPase family. In terms of assembly, associates with the 50S ribosomal subunit.

Functionally, GTPase that plays an essential role in the late steps of ribosome biogenesis. The chain is GTPase Der from Bacillus cytotoxicus (strain DSM 22905 / CIP 110041 / 391-98 / NVH 391-98).